A 416-amino-acid chain; its full sequence is Gamma-glutamyl phosphate reductase (416 aa).

Belongs to the gamma-glutamyl phosphate reductase family.

It is found in the cytoplasm. It carries out the reaction L-glutamate 5-semialdehyde + phosphate + NADP(+) = L-glutamyl 5-phosphate + NADPH + H(+). It participates in amino-acid biosynthesis; L-proline biosynthesis; L-glutamate 5-semialdehyde from L-glutamate: step 2/2. Functionally, catalyzes the NADPH-dependent reduction of L-glutamate 5-phosphate into L-glutamate 5-semialdehyde and phosphate. The product spontaneously undergoes cyclization to form 1-pyrroline-5-carboxylate. The chain is Gamma-glutamyl phosphate reductase from Leptospira interrogans serogroup Icterohaemorrhagiae serovar Lai (strain 56601).